The primary structure comprises 89 residues: UPF0237 protein lin0537 (89 aa).

An ACT domain is found at 4 to 78; sequence VLTVIGKDNV…EELQVKIHIQ (75 aa).

Belongs to the UPF0237 family.

The sequence is that of UPF0237 protein lin0537 from Listeria innocua serovar 6a (strain ATCC BAA-680 / CLIP 11262).